Reading from the N-terminus, the 111-residue chain is Small ubiquitin-related modifier 3 (111 aa).

One can recognise a Ubiquitin-like domain in the interval Ala-16 to Gly-93. A Glycyl lysine isopeptide (Gly-Lys) (interchain with K-? in acceptor proteins) cross-link involves residue Gly-93.

Belongs to the ubiquitin family. SUMO subfamily. As to quaternary structure, interacts with SAE2, SCE1, SIZ1 and MMS21. Covalently attached to a number of proteins. Interacts with NPR1; this interaction promotes NPR1 phosphorylation and triggers its sumoylation and subsequent degradation.

It is found in the nucleus. The protein localises to the cytoplasm. In terms of biological role, ubiquitin-like protein which can be covalently attached to target lysines as a monomer. Does not seem to be involved in protein degradation and may function as an antagonist of ubiquitin in the degradation process. Promotes NPR1 sumoylation to activate defense gene expression and regulate its degradation. This Arabidopsis thaliana (Mouse-ear cress) protein is Small ubiquitin-related modifier 3.